A 229-amino-acid chain; its full sequence is Ribonuclease 3 (229 aa).

The 130-residue stretch at 5 to 134 (EQKLEQDFGI…FLGALYLDQG (130 aa)) folds into the RNase III domain. Position 47 (Glu47) interacts with Mg(2+). Asp51 is an active-site residue. 2 residues coordinate Mg(2+): Asp120 and Glu123. Residue Glu123 is part of the active site. Residues 160–229 (DYKTALQERL…AKSALEQLGN (70 aa)) enclose the DRBM domain.

It belongs to the ribonuclease III family. As to quaternary structure, homodimer. Mg(2+) serves as cofactor.

It localises to the cytoplasm. It catalyses the reaction Endonucleolytic cleavage to 5'-phosphomonoester.. Functionally, digests double-stranded RNA. Involved in the processing of primary rRNA transcript to yield the immediate precursors to the large and small rRNAs (23S and 16S). Also processes some mRNAs, and tRNAs when they are encoded in the rRNA operon. In terms of biological role, CRISPR (clustered regularly interspaced short palindromic repeat) is an adaptive immune system that provides protection against mobile genetic elements (viruses, transposable elements and conjugative plasmids). CRISPR clusters contain spacers, sequences complementary to antecedent mobile elements, and target invading nucleic acids. CRISPR clusters are transcribed and processed into CRISPR RNA (crRNA). In this organism endogenous ribonuclease 3 and Cas9 are required for correct coprocessing of pre-crRNA and the trans-encoded small RNA (tracrRNA). Cas9, crRNA and tracrRNA are required for cleavage of invading DNA. Complements pre-crRNA and tracRNA coprocessing defects in an rnc deletion in S.pyogenes strain 370. The protein is Ribonuclease 3 of Streptococcus thermophilus (strain ATCC BAA-491 / LMD-9).